A 283-amino-acid chain; its full sequence is tRNA-cytidine(32) 2-sulfurtransferase (283 aa).

Positions 37 to 42 (SGGKDS) match the PP-loop motif motif. [4Fe-4S] cluster contacts are provided by C112, C115, and C203.

The protein belongs to the TtcA family. Homodimer. Mg(2+) serves as cofactor. It depends on [4Fe-4S] cluster as a cofactor.

Its subcellular location is the cytoplasm. It carries out the reaction cytidine(32) in tRNA + S-sulfanyl-L-cysteinyl-[cysteine desulfurase] + AH2 + ATP = 2-thiocytidine(32) in tRNA + L-cysteinyl-[cysteine desulfurase] + A + AMP + diphosphate + H(+). The protein operates within tRNA modification. Functionally, catalyzes the ATP-dependent 2-thiolation of cytidine in position 32 of tRNA, to form 2-thiocytidine (s(2)C32). The sulfur atoms are provided by the cysteine/cysteine desulfurase (IscS) system. The sequence is that of tRNA-cytidine(32) 2-sulfurtransferase from Legionella pneumophila (strain Paris).